The chain runs to 739 residues: Glycine--tRNA ligase (739 aa).

The N-terminal 36 residues, 1-36 (MPSPRPVLLRGARAALLLLLPPRLLARPSLLLRRSL), are a transit peptide targeting the mitochondrion. Ser-35 is subject to Phosphoserine. The WHEP-TRS domain occupies 63-119 (VLAPLRLAVRQQGDLVRKLKEDKAPQVDVDKAVAELKARKRVLEAKELALQPKDDIV). Lys-204 is modified (N6-acetyllysine). Glu-299 is a binding site for glycine. ATP is bound by residues 331 to 333 (RNE) and 342 to 343 (RV). Residue Glu-350 coordinates glycine. Phosphotyrosine is present on Tyr-453. Position 457-458 (457-458 (EI)) interacts with ATP. An N6-acetyllysine modification is found at Lys-501. 576–578 (EPS) serves as a coordination point for glycine. Arg-583 lines the ATP pocket. At Ser-700 the chain carries Phosphoserine. Thr-736 is subject to Phosphothreonine.

It belongs to the class-II aminoacyl-tRNA synthetase family. Homodimer. In terms of tissue distribution, widely expressed, including in brain and spinal cord. As to expression, expressed in brain, spinal cord, muscle, heart and spleen. Expressed in brain, spinal cord, muscle, heart, spleen and liver.

It is found in the cytoplasm. The protein localises to the cell projection. It localises to the axon. The protein resides in the secreted. Its subcellular location is the extracellular exosome. It is found in the mitochondrion. It carries out the reaction tRNA(Gly) + glycine + ATP = glycyl-tRNA(Gly) + AMP + diphosphate. It catalyses the reaction 2 ATP + H(+) = P(1),P(4)-bis(5'-adenosyl) tetraphosphate + diphosphate. With respect to regulation, ap4A synthesis is inhibited by tRNA, via the disruption of the second ATP-binding site by direct blocking and/or by tRNA-induced conformational change. Catalyzes the ATP-dependent ligation of glycine to the 3'-end of its cognate tRNA, via the formation of an aminoacyl-adenylate intermediate (Gly-AMP). Also produces diadenosine tetraphosphate (Ap4A), a universal pleiotropic signaling molecule needed for cell regulation pathways, by direct condensation of 2 ATPs. Thereby, may play a special role in Ap4A homeostasis. This is Glycine--tRNA ligase from Homo sapiens (Human).